Reading from the N-terminus, the 460-residue chain is Argininosuccinate lyase (460 aa).

It belongs to the lyase 1 family. Argininosuccinate lyase subfamily.

Its subcellular location is the cytoplasm. It carries out the reaction 2-(N(omega)-L-arginino)succinate = fumarate + L-arginine. Its pathway is amino-acid biosynthesis; L-arginine biosynthesis; L-arginine from L-ornithine and carbamoyl phosphate: step 3/3. In Campylobacter jejuni subsp. doylei (strain ATCC BAA-1458 / RM4099 / 269.97), this protein is Argininosuccinate lyase.